The chain runs to 539 residues: Chaperonin GroEL (539 aa).

Residues 30–33 (TLGP), K51, 87–91 (DGTTT), G415, 479–481 (NAA), and D495 contribute to the ATP site.

Belongs to the chaperonin (HSP60) family. As to quaternary structure, forms a cylinder of 14 subunits composed of two heptameric rings stacked back-to-back. Interacts with the co-chaperonin GroES.

Its subcellular location is the cytoplasm. It carries out the reaction ATP + H2O + a folded polypeptide = ADP + phosphate + an unfolded polypeptide.. In terms of biological role, together with its co-chaperonin GroES, plays an essential role in assisting protein folding. The GroEL-GroES system forms a nano-cage that allows encapsulation of the non-native substrate proteins and provides a physical environment optimized to promote and accelerate protein folding. In Kluyvera intermedia (Enterobacter intermedius), this protein is Chaperonin GroEL.